A 64-amino-acid chain; its full sequence is Defensin-like protein 41 (64 aa).

The interval 1–21 is disordered; it reads MTQGKRKHPCDLKNPSKRAPP. Disulfide bonds link C10/C61, C24/C47, C33/C56, and C37/C58.

The protein belongs to the DEFL family.

In Arabidopsis thaliana (Mouse-ear cress), this protein is Defensin-like protein 41.